A 469-amino-acid polypeptide reads, in one-letter code: MTAQTLYDKLWNSHVVREEGDGTVLLYIDRHLVHEVTSPQAFEGLKMAGRKLWRIDSVVSTADHNTPTGDWDKGIQDPISKLQVDTLDQNIKEFGALAYFPFMDKGQGIVHVMGPEQGATLPGMTVVCGDSHTSTHGAFGALAHGIGTSEVEHTMATQCITAKKSKSMLIAVDGKLKAGVTAKDVALYIIGQIGTAGGTGYAVEFGGEAIRSLSMEGRMTLCNMAIEAGARSGMVAVDQTTIDYVKGKPFAPEGEAWDKAVEYWRTLVSDEGAVFDKEYRFNAEDIEPQVTWGTSPEMVLNIGGKVPNPAEETDPVKRSGIERALEYMGLKAGTPLNEIPVDIVFIGSCTNSRIEDLREAAAIAKGHKKAGNVQRVLIVPGSGLVKEQAEKEGLDKIFIEAGFEWREPGCSMCLAMNADRLAPRQRCASTSNRNFEGRQGNGGRTHLVSPAMAAAAAVTGHFTDIRTMA.

Positions 349, 410, and 413 each coordinate [4Fe-4S] cluster.

The protein belongs to the aconitase/IPM isomerase family. LeuC type 1 subfamily. In terms of assembly, heterodimer of LeuC and LeuD. The cofactor is [4Fe-4S] cluster.

It carries out the reaction (2R,3S)-3-isopropylmalate = (2S)-2-isopropylmalate. It functions in the pathway amino-acid biosynthesis; L-leucine biosynthesis; L-leucine from 3-methyl-2-oxobutanoate: step 2/4. In terms of biological role, catalyzes the isomerization between 2-isopropylmalate and 3-isopropylmalate, via the formation of 2-isopropylmaleate. This Neisseria gonorrhoeae (strain NCCP11945) protein is 3-isopropylmalate dehydratase large subunit.